The chain runs to 307 residues: Oxygen-dependent coproporphyrinogen-III oxidase (307 aa).

Position 99 (Ser-99) interacts with substrate. A divalent metal cation-binding residues include His-103 and His-113. The Proton donor role is filled by His-113. 115-117 (NVR) serves as a coordination point for substrate. Positions 152 and 182 each coordinate a divalent metal cation. The segment at 247 to 282 (YVEFNLVFDRGTLFGLQSGGRTESILLSMPPTAGWR) is important for dimerization. Position 265–267 (265–267 (GGR)) interacts with substrate.

This sequence belongs to the aerobic coproporphyrinogen-III oxidase family. As to quaternary structure, homodimer. It depends on a divalent metal cation as a cofactor.

It is found in the cytoplasm. It catalyses the reaction coproporphyrinogen III + O2 + 2 H(+) = protoporphyrinogen IX + 2 CO2 + 2 H2O. It functions in the pathway porphyrin-containing compound metabolism; protoporphyrin-IX biosynthesis; protoporphyrinogen-IX from coproporphyrinogen-III (O2 route): step 1/1. Functionally, involved in the heme biosynthesis. Catalyzes the aerobic oxidative decarboxylation of propionate groups of rings A and B of coproporphyrinogen-III to yield the vinyl groups in protoporphyrinogen-IX. The sequence is that of Oxygen-dependent coproporphyrinogen-III oxidase from Burkholderia mallei (strain SAVP1).